Consider the following 480-residue polypeptide: Acetyl-coenzyme A carboxylase carboxyl transferase subunit beta, chloroplastic (480 aa).

A disordered region spans residues Thr-25–Asn-48. Positions Ser-35–Lys-47 are enriched in basic and acidic residues. The 265-residue stretch at Leu-216–Asn-480 folds into the CoA carboxyltransferase N-terminal domain. The Zn(2+) site is built by Cys-220, Cys-223, Cys-239, and Cys-242. The segment at Cys-220–Cys-242 adopts a C4-type zinc-finger fold.

It belongs to the AccD/PCCB family. In terms of assembly, acetyl-CoA carboxylase is a heterohexamer composed of biotin carboxyl carrier protein, biotin carboxylase and 2 subunits each of ACCase subunit alpha and ACCase plastid-coded subunit beta (accD). Zn(2+) is required as a cofactor.

Its subcellular location is the plastid. The protein resides in the chloroplast stroma. It carries out the reaction N(6)-carboxybiotinyl-L-lysyl-[protein] + acetyl-CoA = N(6)-biotinyl-L-lysyl-[protein] + malonyl-CoA. The protein operates within lipid metabolism; malonyl-CoA biosynthesis; malonyl-CoA from acetyl-CoA: step 1/1. Functionally, component of the acetyl coenzyme A carboxylase (ACC) complex. Biotin carboxylase (BC) catalyzes the carboxylation of biotin on its carrier protein (BCCP) and then the CO(2) group is transferred by the transcarboxylase to acetyl-CoA to form malonyl-CoA. The protein is Acetyl-coenzyme A carboxylase carboxyl transferase subunit beta, chloroplastic of Helianthus annuus (Common sunflower).